The following is a 142-amino-acid chain: Peptide methionine sulfoxide reductase MsrB (142 aa).

The MsrB domain maps to 10-132 (EEEWKKVLTP…NSVSLNFKTE (123 aa)). Cys49, Cys52, Cys98, and Cys101 together coordinate Zn(2+). The active-site Nucleophile is the Cys121.

This sequence belongs to the MsrB Met sulfoxide reductase family. The cofactor is Zn(2+).

It carries out the reaction L-methionyl-[protein] + [thioredoxin]-disulfide + H2O = L-methionyl-(R)-S-oxide-[protein] + [thioredoxin]-dithiol. In Methanosarcina barkeri (strain Fusaro / DSM 804), this protein is Peptide methionine sulfoxide reductase MsrB.